The chain runs to 519 residues: MNLLSLLLILLGIILGVVVGYIVARNLLHQKQVQARQTADDIVSYANKEADNIKKEKLLEAKEENQILKEQAENELRERRGELQRQETRLLQKEENLDRKSDLLDKKDEILEQKESKLEERQQQVDAKESSVQTLIMKHEQELERISGLTQEEAVKEQLQRVEEELSQDIAILVKEKEKEAKEKVDKTAKELLATTVQRLAAEHTTESTVSVVNLPNDEMKGRIIGREGRNIRTLETLTGIDLIIDDTPEAVILSGFDPIRREIARTALVNLVSDGRIHPGRIEDMVEKARKEVDDIIRDAGEQATFEINVHNMHPDLVKILGRLNYRTSYGQNVLKHSIEVAHLSGMLAAELGEDVTLAKRAGLLHDVGKAIDHEVEGSHVEIGVELAKKYNENNIIINAIHSHHGDVEPTSIISILVAAADALSAARPGARKETLENYIRRLERLETLSESYDGVEKAFAIQAGREIRVVVSPEEIDDLKSYRLARDIKNQIEEELQYPGHIKVTVVRETRAIEYAK.

A helical transmembrane segment spans residues 3–23; sequence LLSLLLILLGIILGVVVGYIV. Positions 209–269 constitute a KH domain; it reads TVSVVNLPND…IRREIARTAL (61 aa). One can recognise an HD domain in the interval 335–428; it reads VLKHSIEVAH…VAAADALSAA (94 aa).

This sequence belongs to the RNase Y family.

Its subcellular location is the cell membrane. Endoribonuclease that initiates mRNA decay. In Staphylococcus epidermidis (strain ATCC 35984 / DSM 28319 / BCRC 17069 / CCUG 31568 / BM 3577 / RP62A), this protein is Ribonuclease Y.